Here is a 277-residue protein sequence, read N- to C-terminus: Phosphatidylglycerol--prolipoprotein diacylglyceryl transferase (277 aa).

4 helical membrane passes run 15 to 35 (IHVRWYGIIIACGILLATFMS), 50 to 70 (IDLLLWGVPIGFIGARIYYVI), 89 to 109 (GGIAIYGGLIAGAIVLLVFCY), and 112 to 132 (FLPPFLVLDIVAPGVMAAQVL). Arg134 lines the a 1,2-diacyl-sn-glycero-3-phospho-(1'-sn-glycerol) pocket. A run of 3 helical transmembrane segments spans residues 174-194 (KPTFLYESFFNLIGLIIILSL), 204-224 (GEVFMLYLAWYSVVRFFVEGM), and 234-254 (VIRVSQALSLLLLIAVVILFV).

This sequence belongs to the Lgt family.

The protein resides in the cell membrane. The catalysed reaction is L-cysteinyl-[prolipoprotein] + a 1,2-diacyl-sn-glycero-3-phospho-(1'-sn-glycerol) = an S-1,2-diacyl-sn-glyceryl-L-cysteinyl-[prolipoprotein] + sn-glycerol 1-phosphate + H(+). The protein operates within protein modification; lipoprotein biosynthesis (diacylglyceryl transfer). Catalyzes the transfer of the diacylglyceryl group from phosphatidylglycerol to the sulfhydryl group of the N-terminal cysteine of a prolipoprotein, the first step in the formation of mature lipoproteins. In Lactobacillus delbrueckii subsp. bulgaricus (strain ATCC 11842 / DSM 20081 / BCRC 10696 / JCM 1002 / NBRC 13953 / NCIMB 11778 / NCTC 12712 / WDCM 00102 / Lb 14), this protein is Phosphatidylglycerol--prolipoprotein diacylglyceryl transferase.